The sequence spans 143 residues: Actin-depolymerizing factor 5 (143 aa).

The 133-residue stretch at 11 to 143 (GMNVKEECQR…GYDVIRGRAQ (133 aa)) folds into the ADF-H domain.

This sequence belongs to the actin-binding proteins ADF family.

Actin-depolymerizing protein. Severs actin filaments (F-actin) and binds to actin monomers. This chain is Actin-depolymerizing factor 5 (ADF5), found in Oryza sativa subsp. japonica (Rice).